Reading from the N-terminus, the 204-residue chain is Thymidylate kinase (204 aa).

11-18 lines the ATP pocket; sequence GLDKSGKT.

It belongs to the thymidylate kinase family.

It carries out the reaction dTMP + ATP = dTDP + ADP. Its pathway is pyrimidine metabolism; dTTP biosynthesis. This is Thymidylate kinase (TMK) from Vaccinia virus (strain Ankara) (VACV).